Reading from the N-terminus, the 62-residue chain is MFTLKKSLLLLFFLGTISLSLCEQERGADEEENGGEVTEQEVKRNVLSSVANGINRALSFFG.

The first 22 residues, 1–22 (MFTLKKSLLLLFFLGTISLSLC), serve as a signal peptide directing secretion. Positions 23–44 (EQERGADEEENGGEVTEQEVKR) are excised as a propeptide.

Belongs to the frog skin active peptide (FSAP) family. Amolopin subfamily. As to expression, expressed by the skin glands.

It is found in the secreted. In terms of biological role, antimicrobial peptide with activity against Gram-positive bacteria. Has been tested against S.aureus (MIC=37.5 ug/mL), against B.pumilus (MIC=75.0 ug/mL), B.cereus (no activity detected). Does not show activity against Gram-negative bacteria (E.coli, B.dysenteriae, A.calcoaceticus, P.aeruginosa) and fungi (C.albicans). Does not show hemolytic activity against rabbit erythrocytes. In Amolops loloensis (Lolokou Sucker Frog), this protein is Amolopin-P2.